Consider the following 64-residue polypeptide: Beta-defensin 13 (64 aa).

The signal sequence occupies residues 1-22 (MRIFSLIVAGLVLLIQLYPAWG). 3 disulfide bridges follow: C30/C57, C37/C51, and C41/C58.

It belongs to the beta-defensin family. As to expression, expressed in testis and to a lesser extent in epididymis (caput, corpus and cauda). Also weakly expressed in kidneys.

The protein localises to the secreted. In terms of biological role, has antibacterial activity. The polypeptide is Beta-defensin 13 (Defb13) (Mus musculus (Mouse)).